The sequence spans 460 residues: Glutamyl-tRNA reductase (460 aa).

Residues 48 to 51 (TCNR), Ser-100, 105 to 107 (EDQ), and Gln-111 contribute to the substrate site. Cys-49 functions as the Nucleophile in the catalytic mechanism. 180–185 (GAGEIG) is an NADP(+) binding site.

The protein belongs to the glutamyl-tRNA reductase family. Homodimer.

It carries out the reaction (S)-4-amino-5-oxopentanoate + tRNA(Glu) + NADP(+) = L-glutamyl-tRNA(Glu) + NADPH + H(+). It functions in the pathway porphyrin-containing compound metabolism; protoporphyrin-IX biosynthesis; 5-aminolevulinate from L-glutamyl-tRNA(Glu): step 1/2. In terms of biological role, catalyzes the NADPH-dependent reduction of glutamyl-tRNA(Glu) to glutamate 1-semialdehyde (GSA). This chain is Glutamyl-tRNA reductase, found in Methanosarcina acetivorans (strain ATCC 35395 / DSM 2834 / JCM 12185 / C2A).